The following is a 316-amino-acid chain: Myb-related protein 306 (316 aa).

2 consecutive HTH myb-type domains span residues 9 to 65 and 66 to 116; these read KIGV…RPGI and KRGD…KKKL. 2 DNA-binding regions (H-T-H motif) span residues 37-61 and 89-112; these read WRAI…TNYL and WAAI…NTHL. Disordered regions lie at residues 119-144, 168-193, and 209-230; these read LQSP…SKGQ, KTSS…QAST, and KKSP…TTTS. Residues 135 to 144 show a composition bias toward basic and acidic residues; it reads DSDKSVSKGQ. Polar residues predominate over residues 181–193; that stretch reads VQTTQPRPFQAST. A compositionally biased stretch (low complexity) spans 216–230; sequence SSTSQAGSSESTTTS.

Expressed in flowers, leaves and weakly in seed pods.

The protein resides in the nucleus. Functionally, transcription factor. The protein is Myb-related protein 306 of Antirrhinum majus (Garden snapdragon).